Reading from the N-terminus, the 308-residue chain is Homeobox protein abdominal-A homolog (308 aa).

Residues 138–197 (RRRGRQTYTRFQTLELEKEFHFNHYLTRRRRIEIAHALCLTERQIKIWFQNRRMKLKKEL) constitute a DNA-binding region (homeobox). Basic and acidic residues predominate over residues 207–221 (ARREREEQDKMKNES). Residues 207-277 (ARREREEQDK…SGNLGSHLHH (71 aa)) form a disordered region. Low complexity predominate over residues 223–247 (KSAQQHHSQKQAQQEHTVVGSQQTS). Residues 248-269 (NGGGTGGGTGGSGGAGSGGSSG) are compositionally biased toward gly residues.

Belongs to the Antp homeobox family.

Its subcellular location is the nucleus. Its function is as follows. Sequence-specific transcription factor which is part of a developmental regulatory system that provides cells with specific positional identities on the anterior-posterior axis. The polypeptide is Homeobox protein abdominal-A homolog (Anopheles gambiae (African malaria mosquito)).